A 112-amino-acid chain; its full sequence is M-myrmeciitoxin-Mp1 (112 aa).

The N-terminal stretch at 1–26 (MKLSCLLLTLTIIFVLTIVHAPNVEA) is a signal peptide. A propeptide spanning residues 27-56 (KDLADPESEAVGFADAFGEADAVGEADPNA) is cleaved from the precursor. The segment at 57–78 (GLGSVFGRLARILGRVIPKVAK) is critical for cytotoxic activity. The tract at residues 93-106 (KEAIPMAVEMAKSQ) is igE-binding determinant.

This sequence belongs to the formicidae venom precursor-01 superfamily. Ant pilosulin family. In terms of tissue distribution, expressed by the venom gland.

The protein resides in the secreted. In terms of biological role, has strong cytotoxic and hemolytic activities. Is more potent against mononuclear leukocytes than against granulocytes. The synthesized peptide 57-76 shows a potent and broad spectrum antimicrobial activity against both Gram-positive and Gram-negative bacteria, and also against the fungus C.albicans. Adopts an alpha-helical structure. The chain is M-myrmeciitoxin-Mp1 from Myrmecia pilosula (Jack jumper ant).